Here is a 458-residue protein sequence, read N- to C-terminus: Bifunctional protein GlmU (458 aa).

Positions 1–229 (MNKFAIVLAA…FDESLGVNDR (229 aa)) are pyrophosphorylase. UDP-N-acetyl-alpha-D-glucosamine-binding positions include 8–11 (LAAG), Lys-22, Gln-72, and 77–78 (GT). Asp-102 contacts Mg(2+). UDP-N-acetyl-alpha-D-glucosamine is bound by residues Gly-139, Glu-154, Asn-169, and Asn-227. A Mg(2+)-binding site is contributed by Asn-227. Residues 230–250 (VALSQAELTMRKRINHQHMVN) are linker. Residues 251-458 (GVTLIDPATT…AKKMPHYRGQ (208 aa)) are N-acetyltransferase. 2 residues coordinate UDP-N-acetyl-alpha-D-glucosamine: Arg-332 and Lys-350. His-362 functions as the Proton acceptor in the catalytic mechanism. Residues Tyr-365 and Asn-376 each contribute to the UDP-N-acetyl-alpha-D-glucosamine site. Residues Ala-379, Ser-404, Ala-422, and Arg-439 each coordinate acetyl-CoA.

In the N-terminal section; belongs to the N-acetylglucosamine-1-phosphate uridyltransferase family. It in the C-terminal section; belongs to the transferase hexapeptide repeat family. As to quaternary structure, homotrimer. Requires Mg(2+) as cofactor.

It is found in the cytoplasm. It carries out the reaction alpha-D-glucosamine 1-phosphate + acetyl-CoA = N-acetyl-alpha-D-glucosamine 1-phosphate + CoA + H(+). The catalysed reaction is N-acetyl-alpha-D-glucosamine 1-phosphate + UTP + H(+) = UDP-N-acetyl-alpha-D-glucosamine + diphosphate. Its pathway is nucleotide-sugar biosynthesis; UDP-N-acetyl-alpha-D-glucosamine biosynthesis; N-acetyl-alpha-D-glucosamine 1-phosphate from alpha-D-glucosamine 6-phosphate (route II): step 2/2. It functions in the pathway nucleotide-sugar biosynthesis; UDP-N-acetyl-alpha-D-glucosamine biosynthesis; UDP-N-acetyl-alpha-D-glucosamine from N-acetyl-alpha-D-glucosamine 1-phosphate: step 1/1. It participates in bacterial outer membrane biogenesis; LPS lipid A biosynthesis. Functionally, catalyzes the last two sequential reactions in the de novo biosynthetic pathway for UDP-N-acetylglucosamine (UDP-GlcNAc). The C-terminal domain catalyzes the transfer of acetyl group from acetyl coenzyme A to glucosamine-1-phosphate (GlcN-1-P) to produce N-acetylglucosamine-1-phosphate (GlcNAc-1-P), which is converted into UDP-GlcNAc by the transfer of uridine 5-monophosphate (from uridine 5-triphosphate), a reaction catalyzed by the N-terminal domain. The polypeptide is Bifunctional protein GlmU (Lactococcus lactis subsp. lactis (strain IL1403) (Streptococcus lactis)).